Reading from the N-terminus, the 199-residue chain is GTP cyclohydrolase-2 (199 aa).

49–53 provides a ligand contact to GTP; it reads RIHSE. The Zn(2+) site is built by cysteine 54, cysteine 65, and cysteine 67. GTP contacts are provided by residues glutamine 70, 92–94, and threonine 114; that span reads EGR. Aspartate 126 (proton acceptor) is an active-site residue. Arginine 128 acts as the Nucleophile in catalysis. Threonine 149 and lysine 154 together coordinate GTP. The tract at residues 172–199 is disordered; sequence ETGRNPHNSHYLETKRGKLGHLLEGDSE.

Belongs to the GTP cyclohydrolase II family. Zn(2+) serves as cofactor.

It carries out the reaction GTP + 4 H2O = 2,5-diamino-6-hydroxy-4-(5-phosphoribosylamino)-pyrimidine + formate + 2 phosphate + 3 H(+). The protein operates within cofactor biosynthesis; riboflavin biosynthesis; 5-amino-6-(D-ribitylamino)uracil from GTP: step 1/4. Catalyzes the conversion of GTP to 2,5-diamino-6-ribosylamino-4(3H)-pyrimidinone 5'-phosphate (DARP), formate and pyrophosphate. This is GTP cyclohydrolase-2 from Teredinibacter turnerae (strain ATCC 39867 / T7901).